Here is a 184-residue protein sequence, read N- to C-terminus: Endoribonuclease YbeY (184 aa).

Residues H151, H155, and H161 each contribute to the Zn(2+) site.

The protein belongs to the endoribonuclease YbeY family. Zn(2+) is required as a cofactor.

It is found in the cytoplasm. Functionally, single strand-specific metallo-endoribonuclease involved in late-stage 70S ribosome quality control and in maturation of the 3' terminus of the 16S rRNA. This is Endoribonuclease YbeY from Prochlorococcus marinus (strain NATL2A).